The following is a 705-amino-acid chain: Polyribonucleotide nucleotidyltransferase (705 aa).

Residues Asp486 and Asp492 each coordinate Mg(2+). The 60-residue stretch at 553–612 folds into the KH domain; it reads PRIHTIRINPDKIKDVIGKGGSVIRALTEETGTTIEIEDDGTVKIAATDGEKAKFAIRRI. The 69-residue stretch at 622–690 folds into the S1 motif domain; that stretch reads GRIYQGKVTR…RQGRVRLSIK (69 aa).

The protein belongs to the polyribonucleotide nucleotidyltransferase family. Component of the RNA degradosome, which is a multiprotein complex involved in RNA processing and mRNA degradation. Mg(2+) is required as a cofactor.

Its subcellular location is the cytoplasm. The enzyme catalyses RNA(n+1) + phosphate = RNA(n) + a ribonucleoside 5'-diphosphate. Involved in mRNA degradation. Catalyzes the phosphorolysis of single-stranded polyribonucleotides processively in the 3'- to 5'-direction. The chain is Polyribonucleotide nucleotidyltransferase from Serratia proteamaculans (strain 568).